An 82-amino-acid polypeptide reads, in one-letter code: Beta-defensin 119 (82 aa).

Positions 1–19 are cleaved as a signal peptide; the sequence is MKFFLFFVILLAMEPVISG. 3 cysteine pairs are disulfide-bonded: Cys26–Cys53, Cys33–Cys47, and Cys37–Cys54.

The protein belongs to the beta-defensin family.

Its subcellular location is the secreted. Its function is as follows. Has antibacterial activity. This Canis lupus familiaris (Dog) protein is Beta-defensin 119 (DEFB119).